A 94-amino-acid chain; its full sequence is Conotoxin Qc6.1 (94 aa).

Residues 1 to 22 form the signal peptide; that stretch reads MKLTCMMIVALLFLTAWTFVTA. The propeptide occupies 23-62; sequence VDSKNELENRGGWGQAGGWGKLFPMARDEMKNSEVSKLDN. 3 disulfide bridges follow: Cys66-Cys84, Cys73-Cys88, and Cys83-Cys92.

The protein belongs to the conotoxin O1 superfamily. In terms of tissue distribution, expressed by the venom duct.

The protein resides in the secreted. The polypeptide is Conotoxin Qc6.1 (Conus quercinus (Oak cone)).